A 455-amino-acid polypeptide reads, in one-letter code: Succinyl-CoA--L-malate CoA-transferase alpha subunit (455 aa).

The segment at 1–58 (MAKASRLTRSTGQPTEVSEGQVTGTSEMPPTGEEPSGHAESKPPASDPMSTPGTGQEQ) is disordered. Polar residues-rich tracts occupy residues 7 to 28 (LTRS…TSEM) and 48 to 58 (PMSTPGTGQEQ). The active-site Nucleophile is aspartate 227.

It belongs to the CoA-transferase III family. In terms of assembly, forms a large complex composed of six heterodimers (alpha, beta).

It catalyses the reaction succinyl-CoA + (S)-malate = (S)-malyl-CoA + succinate. The enzyme catalyses (3S)-citramalate + succinyl-CoA = (3S)-citramalyl-CoA + succinate. Involved in the 3-hydroxypropionate cycle used for autotrophic carbon dioxide fixation. Catalyzes the transfer of CoA moiety from succinyl-CoA to L-malate to yield L-malyl-CoA. This is Succinyl-CoA--L-malate CoA-transferase alpha subunit (smtA) from Chloroflexus aurantiacus (strain ATCC 29366 / DSM 635 / J-10-fl).